Consider the following 234-residue polypeptide: Glucosamine-6-phosphate deaminase (234 aa).

The Proton acceptor; for enolization step role is filled by aspartate 62. Asparagine 128 serves as the catalytic For ring-opening step. Histidine 130 functions as the Proton acceptor; for ring-opening step in the catalytic mechanism. The active-site For ring-opening step is glutamate 135.

The protein belongs to the glucosamine/galactosamine-6-phosphate isomerase family. NagB subfamily.

The enzyme catalyses alpha-D-glucosamine 6-phosphate + H2O = beta-D-fructose 6-phosphate + NH4(+). It functions in the pathway amino-sugar metabolism; N-acetylneuraminate degradation; D-fructose 6-phosphate from N-acetylneuraminate: step 5/5. Functionally, catalyzes the reversible isomerization-deamination of glucosamine 6-phosphate (GlcN6P) to form fructose 6-phosphate (Fru6P) and ammonium ion. The protein is Glucosamine-6-phosphate deaminase of Streptococcus equi subsp. zooepidemicus (strain MGCS10565).